Here is a 207-residue protein sequence, read N- to C-terminus: Large ribosomal subunit protein uL4 (207 aa).

Residues histidine 49 to isoleucine 78 are disordered.

The protein belongs to the universal ribosomal protein uL4 family. Part of the 50S ribosomal subunit.

Its function is as follows. One of the primary rRNA binding proteins, this protein initially binds near the 5'-end of the 23S rRNA. It is important during the early stages of 50S assembly. It makes multiple contacts with different domains of the 23S rRNA in the assembled 50S subunit and ribosome. Forms part of the polypeptide exit tunnel. This is Large ribosomal subunit protein uL4 from Streptococcus equi subsp. zooepidemicus (strain MGCS10565).